An 865-amino-acid chain; its full sequence is Protein fluG (865 aa).

Residues 442-533 enclose the GS beta-grasp domain; the sequence is PGVKYVWTQF…VMTWWKSEQG (92 aa). Positions 540–865 constitute a GS catalytic domain; that stretch reads PRTNLLNINN…ARRKWLVERY (326 aa).

This sequence belongs to the glutamine synthetase family.

The protein localises to the cytoplasm. In terms of biological role, may function as a GSI-related enzyme in synthesizing a small diffusible factor that acts as an extracellular signal directing asexual sporulation and perhaps other aspects of colony growth. May be involved in brlA activation (an early transcriptional regulator for conidiation specific gene). The protein is Protein fluG (fluG) of Emericella nidulans (strain FGSC A4 / ATCC 38163 / CBS 112.46 / NRRL 194 / M139) (Aspergillus nidulans).